Reading from the N-terminus, the 255-residue chain is Thiazole synthase (255 aa).

Catalysis depends on lysine 96, which acts as the Schiff-base intermediate with DXP. 1-deoxy-D-xylulose 5-phosphate contacts are provided by residues glycine 157, 183–184 (AG), and 205–206 (NT).

Belongs to the ThiG family. Homotetramer. Forms heterodimers with either ThiH or ThiS.

Its subcellular location is the cytoplasm. It catalyses the reaction [ThiS sulfur-carrier protein]-C-terminal-Gly-aminoethanethioate + 2-iminoacetate + 1-deoxy-D-xylulose 5-phosphate = [ThiS sulfur-carrier protein]-C-terminal Gly-Gly + 2-[(2R,5Z)-2-carboxy-4-methylthiazol-5(2H)-ylidene]ethyl phosphate + 2 H2O + H(+). Its pathway is cofactor biosynthesis; thiamine diphosphate biosynthesis. Catalyzes the rearrangement of 1-deoxy-D-xylulose 5-phosphate (DXP) to produce the thiazole phosphate moiety of thiamine. Sulfur is provided by the thiocarboxylate moiety of the carrier protein ThiS. In vitro, sulfur can be provided by H(2)S. This chain is Thiazole synthase, found in Staphylococcus saprophyticus subsp. saprophyticus (strain ATCC 15305 / DSM 20229 / NCIMB 8711 / NCTC 7292 / S-41).